Reading from the N-terminus, the 552-residue chain is 5'-AMP-activated protein kinase catalytic subunit alpha-2 (552 aa).

Positions 16–268 (YVLGDTLGVG…IKDIREHEWF (253 aa)) constitute a Protein kinase domain. Residues 22 to 30 (LGVGTFGKV) and K45 each bind ATP. Residue D139 is the Proton acceptor of the active site. T172 bears the Phosphothreonine; by LKB1 and CaMKK2 mark. T258 bears the Phosphothreonine mark. Positions 291–376 (EAVKEVCEKF…PERMPPLIAD (86 aa)) are AIS. Phosphoserine is present on residues S377 and S491.

This sequence belongs to the protein kinase superfamily. CAMK Ser/Thr protein kinase family. SNF1 subfamily. As to quaternary structure, AMPK is a heterotrimer of an alpha catalytic subunit (PRKAA1 or PRKAA2), a beta (PRKAB1 or PRKAB2) and a gamma non-catalytic subunits (PRKAG1, PRKAG2 or PRKAG3). Interacts with FNIP1 and FNIP2. Interacts with DUSP29. Interacts with ARF6. The phosphorylated form at Thr-172 mediated by CamKK2 interacts with ACSS2. Mg(2+) serves as cofactor. In terms of processing, ubiquitinated. Phosphorylated at Thr-172 by STK11/LKB1 in complex with STE20-related adapter-alpha (STRADA) pseudo kinase and CAB39. Also phosphorylated at Thr-172 by CAMKK2; triggered by a rise in intracellular calcium ions, without detectable changes in the AMP/ATP ratio. CAMKK1 can also phosphorylate Thr-172, but at much lower level. Dephosphorylated by protein phosphatase 2A and 2C (PP2A and PP2C). Phosphorylated by ULK1; leading to negatively regulate AMPK activity and suggesting the existence of a regulatory feedback loop between ULK1 and AMPK. Dephosphorylated by PPM1A and PPM1B at Thr-172 (mediated by STK11/LKB1).

It localises to the cytoplasm. The protein resides in the nucleus. The catalysed reaction is L-seryl-[protein] + ATP = O-phospho-L-seryl-[protein] + ADP + H(+). It catalyses the reaction L-threonyl-[protein] + ATP = O-phospho-L-threonyl-[protein] + ADP + H(+). The enzyme catalyses L-seryl-[acetyl-CoA carboxylase] + ATP = O-phospho-L-seryl-[acetyl-CoA carboxylase] + ADP + H(+). It carries out the reaction L-seryl-[3-hydroxy-3-methylglutaryl-coenzyme A reductase] + ATP = O-phospho-L-seryl-[3-hydroxy-3-methylglutaryl-coenzyme A reductase] + ADP + H(+). Its activity is regulated as follows. Activated by phosphorylation on Thr-172. Binding of AMP to non-catalytic gamma subunit (PRKAG1, PRKAG2 or PRKAG3) results in allosteric activation, inducing phosphorylation on Thr-172. AMP-binding to gamma subunit also sustains activity by preventing dephosphorylation of Thr-172. ADP also stimulates Thr-172 phosphorylation, without stimulating already phosphorylated AMPK. ATP promotes dephosphorylation of Thr-172, rendering the enzyme inactive. Under physiological conditions AMPK mainly exists in its inactive form in complex with ATP, which is much more abundant than AMP. Selectively inhibited by compound C (6-[4-(2-Piperidin-1-yl-ethoxy)-phenyl)]-3-pyridin-4-yl-pyyrazolo[1,5-a] pyrimidine. Activated by resveratrol, a natural polyphenol present in red wine, and S17834, a synthetic polyphenol. Salicylate/aspirin directly activates kinase activity, primarily by inhibiting Thr-172 dephosphorylation. Functionally, catalytic subunit of AMP-activated protein kinase (AMPK), an energy sensor protein kinase that plays a key role in regulating cellular energy metabolism. In response to reduction of intracellular ATP levels, AMPK activates energy-producing pathways and inhibits energy-consuming processes: inhibits protein, carbohydrate and lipid biosynthesis, as well as cell growth and proliferation. AMPK acts via direct phosphorylation of metabolic enzymes, and by longer-term effects via phosphorylation of transcription regulators. Regulates lipid synthesis by phosphorylating and inactivating lipid metabolic enzymes such as ACACA, ACACB, GYS1, HMGCR and LIPE; regulates fatty acid and cholesterol synthesis by phosphorylating acetyl-CoA carboxylase (ACACA and ACACB) and hormone-sensitive lipase (LIPE) enzymes, respectively. Promotes lipolysis of lipid droplets by mediating phosphorylation of isoform 1 of CHKA (CHKalpha2). Regulates insulin-signaling and glycolysis by phosphorylating IRS1, PFKFB2 and PFKFB3. Involved in insulin receptor/INSR internalization. AMPK stimulates glucose uptake in muscle by increasing the translocation of the glucose transporter SLC2A4/GLUT4 to the plasma membrane, possibly by mediating phosphorylation of TBC1D4/AS160. Regulates transcription and chromatin structure by phosphorylating transcription regulators involved in energy metabolism such as CRTC2/TORC2, FOXO3, histone H2B, HDAC5, MEF2C, MLXIPL/ChREBP, EP300, HNF4A, p53/TP53, SREBF1, SREBF2 and PPARGC1A. Acts as a key regulator of glucose homeostasis in liver by phosphorylating CRTC2/TORC2, leading to CRTC2/TORC2 sequestration in the cytoplasm. In response to stress, phosphorylates 'Ser-36' of histone H2B (H2BS36ph), leading to promote transcription. Acts as a key regulator of cell growth and proliferation by phosphorylating FNIP1, TSC2, RPTOR, WDR24 and ATG1/ULK1: in response to nutrient limitation, negatively regulates the mTORC1 complex by phosphorylating RPTOR component of the mTORC1 complex and by phosphorylating and activating TSC2. Also phosphorylates and inhibits GATOR2 subunit WDR24 in response to nutrient limitation, leading to suppress glucose-mediated mTORC1 activation. In response to energetic stress, phosphorylates FNIP1, inactivating the non-canonical mTORC1 signaling, thereby promoting nuclear translocation of TFEB and TFE3, and inducing transcription of lysosomal or autophagy genes. In response to nutrient limitation, promotes autophagy by phosphorylating and activating ATG1/ULK1. In that process, it also activates WDR45/WIPI4. Phosphorylates CASP6, thereby preventing its autoprocessing and subsequent activation. AMPK also acts as a regulator of circadian rhythm by mediating phosphorylation of CRY1, leading to destabilize it. May regulate the Wnt signaling pathway by phosphorylating CTNNB1, leading to stabilize it. Also acts as a regulator of cellular polarity by remodeling the actin cytoskeleton; probably by indirectly activating myosin. Also phosphorylates CFTR, EEF2K, KLC1, NOS3 and SLC12A1. Plays an important role in the differential regulation of pro-autophagy (composed of PIK3C3, BECN1, PIK3R4 and UVRAG or ATG14) and non-autophagy (composed of PIK3C3, BECN1 and PIK3R4) complexes, in response to glucose starvation. Can inhibit the non-autophagy complex by phosphorylating PIK3C3 and can activate the pro-autophagy complex by phosphorylating BECN1. Upon glucose starvation, promotes ARF6 activation in a kinase-independent manner leading to cell migration. Upon glucose deprivation mediates the phosphorylation of ACSS2 at 'Ser-659', which exposes the nuclear localization signal of ACSS2, required for its interaction with KPNA1 and nuclear translocation. Upon stress, regulates mitochondrial fragmentation through phosphorylation of MTFR1L. The sequence is that of 5'-AMP-activated protein kinase catalytic subunit alpha-2 from Mus musculus (Mouse).